Reading from the N-terminus, the 295-residue chain is Protease HtpX (295 aa).

2 helical membrane-spanning segments follow: residues 4-24 (ILLF…TLSL) and 41-61 (GQLL…SLFI). H147 is a Zn(2+) binding site. E148 is a catalytic residue. Residue H151 participates in Zn(2+) binding. Transmembrane regions (helical) follow at residues 158 to 178 (VTMA…ARII) and 198 to 218 (FVAT…IVMW). E224 contacts Zn(2+).

It belongs to the peptidase M48B family. Zn(2+) is required as a cofactor.

Its subcellular location is the cell inner membrane. The protein is Protease HtpX of Pseudomonas entomophila (strain L48).